The primary structure comprises 528 residues: Cytochrome b5 reductase 4 (528 aa).

Residue Met-1 is modified to N-acetylmethionine. A disordered region spans residues 1–29 (MLNVPSQAFPAPGSQQRVSSQGRSKVPLK). The segment covering 13–24 (GSQQRVSSQGRS) has biased composition (low complexity). The region spanning 54–130 (LIEVTEEELK…LKECLVGRMA (77 aa)) is the Cytochrome b5 heme-binding domain. 2 residues coordinate heme: His-89 and His-112. The CS domain occupies 172–263 (LSSPSYDWFQ…KESVSWQCLG (92 aa)). The FAD-binding FR-type domain occupies 280 to 392 (LYYRRCQLIS…SGPEGDFKVS (113 aa)). FAD contacts are provided by residues 372–387 (DRLQIGDFISVSGPEG) and 399–431 (DLFLLAAGTGFTPMVTVLNYALSHMSSLRKVKL).

It belongs to the flavoprotein pyridine nucleotide cytochrome reductase family. FAD serves as cofactor. In terms of tissue distribution, ubiquitously expressed. Isoform 2 is expressed in testis, brain, skeletal muscle and in the male germline.

It is found in the endoplasmic reticulum. It carries out the reaction 2 Fe(III)-[cytochrome b5] + NADH = 2 Fe(II)-[cytochrome b5] + NAD(+) + H(+). In terms of biological role, NADH-cytochrome b5 reductase involved in endoplasmic reticulum stress response pathway. Plays a critical role in protecting pancreatic beta-cells against oxidant stress, possibly by protecting the cell from excess buildup of reactive oxygen species (ROS). The polypeptide is Cytochrome b5 reductase 4 (Cyb5r4) (Mus musculus (Mouse)).